The primary structure comprises 419 residues: NF-kappa-B essential modulator (419 aa).

Residues 1–46 (MSRTPWKSQPCEMVQPSGGPAGDQDVLGEESSLGKPTMLHLPSEQG) are disordered. Residues 1-197 (MSRTPWKSQP…REALQQQHSV (197 aa)) form a required for interaction with and ubiquitination by MARCHF2 region. A phosphoserine mark is found at Ser31, Ser43, Ser68, and Ser85. The interval 44–111 (EQGAPETFQR…RLVERLSLEK (68 aa)) is interaction with CHUK/IKBKB. The stretch at 100 to 353 (ARRLVERLSL…KTSCQESARI (254 aa)) forms a coiled coil. Glycyl lysine isopeptide (Lys-Gly) (interchain with G-Cter in ubiquitin) cross-links involve residues Lys111, Lys139, Lys143, Lys226, Lys246, and Lys264. Residues 150–257 (LGELQESQSR…SVVSSERNRG (108 aa)) are interaction with TANK. A ubiquitin-binding (UBAN) region spans residues 242–350 (DNHIKSSVVS…SRLKTSCQES (109 aa)). The segment at 246 to 365 (KSSVVSSERN…MRKRHVEVSQ (120 aa)) is self-association. Residues 251–419 (SSERNRGLQL…LQIHVMECIE (169 aa)) form a required for interaction with TNFAIP3 region. Lys277 is covalently cross-linked (Glycyl lysine isopeptide (Lys-Gly) (interchain with G-Cter in SUMO); alternate). Residue Lys277 forms a Glycyl lysine isopeptide (Lys-Gly) (interchain with G-Cter in ubiquitin); alternate linkage. Glycyl lysine isopeptide (Lys-Gly) (interchain with G-Cter in ubiquitin) cross-links involve residues Lys283, Lys285, Lys292, and Lys302. Lys309 participates in a covalent cross-link: Glycyl lysine isopeptide (Lys-Gly) (interchain with G-Cter in SUMO); alternate. Lys309 is covalently cross-linked (Glycyl lysine isopeptide (Lys-Gly) (interchain with G-Cter in ubiquitin); alternate). Residues 322-343 (LAERKELLQEQLEQLQREYSRL) are leucine-zipper. A Glycyl lysine isopeptide (Lys-Gly) (interchain with G-Cter in ubiquitin) cross-link involves residue Lys326. The interval 363 to 394 (VSQPTLPPAPAHHSFHPALPSQRRSPPEEPPN) is disordered. Ser376 and Ser387 each carry phosphoserine. The segment at 382 to 419 (PSQRRSPPEEPPNFCCPKCQYQAPDMDTLQIHVMECIE) is interaction with CYLD. The segment at 389–419 (PEEPPNFCCPKCQYQAPDMDTLQIHVMECIE) adopts a CCHC NOA-type zinc-finger fold. Cys397 is a binding site for Zn(2+). Residue Lys399 forms a Glycyl lysine isopeptide (Lys-Gly) (interchain with G-Cter in ubiquitin) linkage. Zn(2+)-binding residues include Cys400, His413, and Cys417.

As to quaternary structure, homodimer; disulfide-linked. Component of the I-kappa-B-kinase (IKK) core complex consisting of CHUK, IKBKB and IKBKG; probably four alpha/CHUK-beta/IKBKB dimers are associated with four gamma/IKBKG subunits. The IKK core complex seems to associate with regulatory or adapter proteins to form a IKK-signalosome holo-complex. The IKK complex associates with TERF2IP/RAP1, leading to promote IKK-mediated phosphorylation of RELA/p65. Part of a complex composed of NCOA2, NCOA3, CHUK/IKKA, IKBKB, IKBKG and CREBBP. Interacts with COPS3, CYLD, NALP2, TRPC4AP and PIDD1. Interacts with ATM; the complex is exported from the nucleus. Interacts with TRAF6. Interacts with IKBKE. Interacts with TANK; the interaction is enhanced by IKBKE and TBK1. Part of a ternary complex consisting of TANK, IKBKB and IKBKG. Interacts with ZFAND5. Interacts with RIPK2. Interacts with TNIP1 and TNFAIP3; TNIP1 facilitates the TNFAIP3-mediated de-ubiquitination of IKBKG. Interacts with TNFAIP3; the interaction is induced by TNF stimulation and by polyubiquitin. Binds (via UBAN region) polyubiquitin; binds both 'Lys-63'-linked and linear polyubiquitin, with higher affinity for linear ubiquitin. Interacts with NLRP10. Interacts with TANK; this interaction increases in response to DNA damage. Interacts with USP10; this interaction increases in response to DNA damage. Interacts with ZC3H12A; this interaction increases in response to DNA damage. Interacts with IFIT5; the interaction synergizes the recruitment of IKK to MAP3K7 and enhances IKK phosphorylation. Interacts with TRIM29; this interaction induces IKBKG/NEMO ubiquitination and proteolytic degradation. Interacts with TRIM13; this interaction leads to IKBKG/NEMO ubiquitination. Interacts with ARFIP2. Interacts with RIPK1. Interacts with (ubiquitinated) BCL10; interaction with polyubiquitinated BCL10 via both 'Lys-63'-linked and linear ubiquitin is required for TCR-induced NF-kappa-B activation. Interacts with MARCHF2; during the late stages of macrophage viral and bacterial infection; the interaction leads to ubiquitination and degradation of IKBKG/NEMO. Post-translationally, phosphorylation at Ser-68 attenuates aminoterminal homodimerization. In terms of processing, polyubiquitinated on Lys-285 via 'Lys-63'-linked ubiquitin; the ubiquitination is mediated downstream of NOD2 and RIPK2 and probably plays a role in signaling by facilitating interactions with ubiquitin domain-containing proteins and activates the NF-kappa-B pathway. Polyubiquitinated on Lys-285 and Lys-399 through 'Lys-63'-linked ubiquitin; the ubiquitination is mediated by BCL10, MALT1 and TRAF6 and probably plays a role in signaling by facilitating interactions with ubiquitin domain-containing proteins and activates the NF-kappa-B pathway. Monoubiquitinated on Lys-277 and Lys-309; promotes nuclear export. Polyubiquitinated through 'Lys-27' by TRIM23; involved in antiviral innate and inflammatory responses. Linear polyubiquitinated on Lys-111, Lys-143, Lys-226, Lys-246, Lys-264, Lys-277, Lys-285, Lys-292, Lys-302, Lys-309 and Lys-326; the head-to-tail polyubiquitination is mediated by the LUBAC complex and plays a key role in NF-kappa-B activation. Deubiquitinated by USP10 in a TANK-dependent and -independent manner, leading to the negative regulation of NF-kappa-B signaling upon DNA damage. Ubiquitinated at Lys-326 by MARCHF2 following bacterial and viral infection which leads to its degradation. Sumoylated on Lys-277 and Lys-309 with SUMO1; the modification results in phosphorylation of Ser-85 by ATM leading to a replacement of the sumoylation by mono-ubiquitination on these residues. Post-translationally, neddylated by TRIM40, resulting in stabilization of NFKBIA and down-regulation of NF-kappa-B activity. In terms of processing, (Microbial infection) Cleaved by porcine reproductive and respiratory syndrome virus serine protease nsp4 after Glu-349. The cleavage inhibits NEMO proper function.

The protein resides in the cytoplasm. The protein localises to the nucleus. Its function is as follows. Regulatory subunit of the IKK core complex which phosphorylates inhibitors of NF-kappa-B thus leading to the dissociation of the inhibitor/NF-kappa-B complex and ultimately the degradation of the inhibitor. Its binding to scaffolding polyubiquitin plays a key role in IKK activation by multiple signaling receptor pathways. Can recognize and bind both 'Lys-63'-linked and linear polyubiquitin upon cell stimulation, with a much highr affinity for linear polyubiquitin. Could be implicated in NF-kappa-B-mediated protection from cytokine toxicity. Essential for viral activation of IRF3. Involved in TLR3- and IFIH1-mediated antiviral innate response; this function requires 'Lys-27'-linked polyubiquitination. The chain is NF-kappa-B essential modulator (IKBKG) from Sus scrofa (Pig).